A 388-amino-acid chain; its full sequence is Histone H2A.Y (388 aa).

LRR repeat units follow at residues 54–75, 76–96, and 100–121; these read SLQM…PHVP, SLIR…QYLR, and HLQT…KRLG. An LRRCT domain is found at 134-172; the sequence is NPVVNTNNYRNLVFNLFPSLVILDTLDKNGIDQEKAALD. The segment at 256–279 is disordered; that stretch reads RKAPASRNGGVPSKAGKGKMNAFS.

The protein belongs to the histone H2A family. The nucleosome is a histone octamer containing two molecules each of H2A, H2B, H3 and H4 assembled in one H3-H4 heterotetramer and two H2A-H2B heterodimers. The octamer wraps approximately 147 bp of DNA.

It localises to the nucleus. The protein resides in the chromosome. Variant histone H2A which replaces conventional H2A in a subset of nucleosomes. Nucleosomes wrap and compact DNA into chromatin, limiting DNA accessibility to the cellular machineries which require DNA as a template. Histones thereby play a central role in transcription regulation, DNA repair, DNA replication and chromosomal stability. DNA accessibility is regulated via a complex set of post-translational modifications of histones, also called histone code, and nucleosome remodeling. The polypeptide is Histone H2A.Y (HTAY) (Tetrahymena thermophila (strain SB210)).